Here is a 363-residue protein sequence, read N- to C-terminus: MNASAAALNESQVVAVAAEGAAAAATAAGAPDTGEWGPPAASAALGGGGGPNGSLELSSQLPAGPSGLLLSAVNPWDVLLCVSGTVIAGENALVVALIASTPALRTPMFVLVGSLATADLLAGCGLILHFVFQYVVPSETVSLLMVGFLVASFAASVSSLLAITVDRYLSLYNALTYYSRRTLLGVHLLLAATWTVSLGLGLLPVLGWNCLADRTSCSVVRPLTRSHVALLSTSFFVVFGIMLHLYVRICQVVWRHAHQIALQQHCLAPPHLAATRKGVGTLAVVLGTFGASWLPFAIYCVVGSQEDPAIYTYATLLPATYNSMINPIIYAFRNQEIQRALWLLFCGCFQSKVPFRSRSPSEV.

Residues 1 to 75 (MNASAAALNE…SGLLLSAVNP (75 aa)) lie on the Extracellular side of the membrane. Asn2 and Asn9 each carry an N-linked (GlcNAc...) asparagine glycan. The tract at residues 29–48 (GAPDTGEWGPPAASAALGGG) is disordered. N-linked (GlcNAc...) asparagine glycosylation is present at Asn52. The chain crosses the membrane as a helical span at residues 76–95 (WDVLLCVSGTVIAGENALVV). Over 96–107 (ALIASTPALRTP) the chain is Cytoplasmic. Residues 108-131 (MFVLVGSLATADLLAGCGLILHFV) traverse the membrane as a helical segment. Over 132–143 (FQYVVPSETVSL) the chain is Extracellular. Residues 144-165 (LMVGFLVASFAASVSSLLAITV) traverse the membrane as a helical segment. Topologically, residues 166 to 186 (DRYLSLYNALTYYSRRTLLGV) are cytoplasmic. Residues 187 to 206 (HLLLAATWTVSLGLGLLPVL) form a helical membrane-spanning segment. The Extracellular portion of the chain corresponds to 207 to 231 (GWNCLADRTSCSVVRPLTRSHVALL). Residues 232 to 250 (STSFFVVFGIMLHLYVRIC) traverse the membrane as a helical segment. The Cytoplasmic portion of the chain corresponds to 251–278 (QVVWRHAHQIALQQHCLAPPHLAATRKG). A helical membrane pass occupies residues 279 to 305 (VGTLAVVLGTFGASWLPFAIYCVVGSQ). Topologically, residues 306–310 (EDPAI) are extracellular. The helical transmembrane segment at 311 to 332 (YTYATLLPATYNSMINPIIYAF) threads the bilayer. At 333–363 (RNQEIQRALWLLFCGCFQSKVPFRSRSPSEV) the chain is on the cytoplasmic side. Cys346 carries S-palmitoyl cysteine lipidation. 3 positions are modified to phosphoserine: Ser357, Ser359, and Ser361.

This sequence belongs to the G-protein coupled receptor 1 family. In terms of tissue distribution, mainly expressed in the brain. Selectively expressed in striatopallidal neurons in the striatum.

It localises to the cell membrane. Functionally, orphan receptor with constitutive G(s) signaling activity that activate cyclic AMP. Promotes neurite outgrowth and blocks myelin inhibition in neurons. This is G-protein coupled receptor 6 (Gpr6) from Mus musculus (Mouse).